Consider the following 466-residue polypeptide: Soluble pyridine nucleotide transhydrogenase (466 aa).

36–45 (ERYHNIGGGC) is an FAD binding site.

The protein belongs to the class-I pyridine nucleotide-disulfide oxidoreductase family. FAD serves as cofactor.

It localises to the cytoplasm. The enzyme catalyses NAD(+) + NADPH = NADH + NADP(+). In terms of biological role, conversion of NADPH, generated by peripheral catabolic pathways, to NADH, which can enter the respiratory chain for energy generation. The polypeptide is Soluble pyridine nucleotide transhydrogenase (Erwinia tasmaniensis (strain DSM 17950 / CFBP 7177 / CIP 109463 / NCPPB 4357 / Et1/99)).